The primary structure comprises 585 residues: Aspartate--tRNA ligase (585 aa).

Position 173 (glutamate 173) interacts with L-aspartate. The tract at residues 197-200 (QTLK) is aspartate. Arginine 219 is an L-aspartate binding site. Residues 219–221 (RDE) and glutamine 228 each bind ATP. Histidine 446 lines the L-aspartate pocket. Glutamate 480 provides a ligand contact to ATP. Arginine 487 contributes to the L-aspartate binding site. An ATP-binding site is contributed by 532 to 535 (GLDR).

It belongs to the class-II aminoacyl-tRNA synthetase family. Type 1 subfamily. Homodimer.

The protein localises to the cytoplasm. The enzyme catalyses tRNA(Asp) + L-aspartate + ATP = L-aspartyl-tRNA(Asp) + AMP + diphosphate. Functionally, catalyzes the attachment of L-aspartate to tRNA(Asp) in a two-step reaction: L-aspartate is first activated by ATP to form Asp-AMP and then transferred to the acceptor end of tRNA(Asp). This is Aspartate--tRNA ligase from Bacteroides fragilis (strain YCH46).